The primary structure comprises 128 residues: Histone H2A type 1-J (128 aa).

A disordered region spans residues Met1–Ala22. Residue Ser2 is modified to N-acetylserine. Ser2 carries the phosphoserine; by RPS6KA5 modification. Arg4 carries the post-translational modification Citrulline; alternate. Symmetric dimethylarginine; by PRMT5; alternate is present on Arg4. Residue Lys6 is modified to N6-(2-hydroxyisobutyryl)lysine. The segment covering Gln7–Ser19 has biased composition (basic residues). At Lys10 the chain carries N6-(2-hydroxyisobutyryl)lysine; alternate. Lys10 and Lys14 each carry N6-(beta-hydroxybutyryl)lysine; alternate. At Lys10 the chain carries N6-lactoyllysine; alternate. At Lys10 the chain carries N6-succinyllysine; alternate. Lys14 participates in a covalent cross-link: Glycyl lysine isopeptide (Lys-Gly) (interchain with G-Cter in ubiquitin); alternate. Lys16 participates in a covalent cross-link: Glycyl lysine isopeptide (Lys-Gly) (interchain with G-Cter in ubiquitin). Lys37 is subject to N6-(2-hydroxyisobutyryl)lysine; alternate. Lys37 is modified (N6-(beta-hydroxybutyryl)lysine; alternate). Lys37 is modified (N6-crotonyllysine; alternate). 2 positions are modified to N6-(2-hydroxyisobutyryl)lysine: Lys75 and Lys76. Position 96 is an N6-(2-hydroxyisobutyryl)lysine; alternate (Lys96). N6-(beta-hydroxybutyryl)lysine; alternate is present on Lys96. Lys96 is modified (N6-succinyllysine; alternate). Lys96 bears the N6-glutaryllysine; alternate mark. Lys100 is modified (N6-glutaryllysine). Gln105 carries the post-translational modification N5-methylglutamine. Lys119 carries the post-translational modification N6-(2-hydroxyisobutyryl)lysine; alternate. Position 119 is an N6-(beta-hydroxybutyryl)lysine; alternate (Lys119). Lys119 and Lys120 each carry N6-crotonyllysine; alternate. 2 positions are modified to N6-glutaryllysine; alternate: Lys119 and Lys120. A Glycyl lysine isopeptide (Lys-Gly) (interchain with G-Cter in ubiquitin); alternate cross-link involves residue Lys120. Thr121 bears the Phosphothreonine; by DCAF1 mark. Position 126 is an N6-crotonyllysine; alternate (Lys126). At Lys126 the chain carries N6-glutaryllysine; alternate.

This sequence belongs to the histone H2A family. In terms of assembly, the nucleosome is a histone octamer containing two molecules each of H2A, H2B, H3 and H4 assembled in one H3-H4 heterotetramer and two H2A-H2B heterodimers. The octamer wraps approximately 147 bp of DNA. In terms of processing, deiminated on Arg-4 in granulocytes upon calcium entry. Post-translationally, monoubiquitination of Lys-120 (H2AK119Ub) by RING1, TRIM37 and RNF2/RING2 complex gives a specific tag for epigenetic transcriptional repression and participates in X chromosome inactivation of female mammals. It is involved in the initiation of both imprinted and random X inactivation. Ubiquitinated H2A is enriched in inactive X chromosome chromatin. Ubiquitination of H2A functions downstream of methylation of 'Lys-27' of histone H3 (H3K27me). H2AK119Ub by RNF2/RING2 can also be induced by ultraviolet and may be involved in DNA repair. Monoubiquitination of Lys-120 (H2AK119Ub) by TRIM37 may promote transformation of cells in a number of breast cancers. Following DNA double-strand breaks (DSBs), it is ubiquitinated through 'Lys-63' linkage of ubiquitin moieties by the E2 ligase UBE2N and the E3 ligases RNF8 and RNF168, leading to the recruitment of repair proteins to sites of DNA damage. Ubiquitination at Lys-14 and Lys-16 (H2AK13Ub and H2AK15Ub, respectively) in response to DNA damage is initiated by RNF168 that mediates monoubiquitination at these 2 sites, and 'Lys-63'-linked ubiquitin are then conjugated to monoubiquitin; RNF8 is able to extend 'Lys-63'-linked ubiquitin chains in vitro. Deubiquitinated by USP51 at Lys-14 and Lys-16 (H2AK13Ub and H2AK15Ub, respectively) after damaged DNA is repaired. H2AK119Ub and ionizing radiation-induced 'Lys-63'-linked ubiquitination (H2AK13Ub and H2AK15Ub) are distinct events. Phosphorylation on Ser-2 (H2AS1ph) is enhanced during mitosis. Phosphorylation on Ser-2 by RPS6KA5/MSK1 directly represses transcription. Acetylation of H3 inhibits Ser-2 phosphorylation by RPS6KA5/MSK1. Phosphorylation at Thr-121 (H2AT120ph) by DCAF1 is present in the regulatory region of many tumor suppresor genes and down-regulates their transcription. In terms of processing, glutamine methylation at Gln-105 (H2AQ104me) by FBL is specifically dedicated to polymerase I. It is present at 35S ribosomal DNA locus and impairs binding of the FACT complex. Post-translationally, symmetric dimethylation on Arg-4 by the PRDM1/PRMT5 complex may play a crucial role in the germ-cell lineage. Crotonylation (Kcr) is specifically present in male germ cells and marks testis-specific genes in post-meiotic cells, including X-linked genes that escape sex chromosome inactivation in haploid cells. Crotonylation marks active promoters and enhancers and confers resistance to transcriptional repressors. It is also associated with post-meiotically activated genes on autosomes. In terms of processing, lactylated in macrophages by EP300/P300 by using lactoyl-CoA directly derived from endogenous or exogenous lactate, leading to stimulates gene transcription.

It is found in the nucleus. It localises to the chromosome. Its function is as follows. Core component of nucleosome. Nucleosomes wrap and compact DNA into chromatin, limiting DNA accessibility to the cellular machineries which require DNA as a template. Histones thereby play a central role in transcription regulation, DNA repair, DNA replication and chromosomal stability. DNA accessibility is regulated via a complex set of post-translational modifications of histones, also called histone code, and nucleosome remodeling. The sequence is that of Histone H2A type 1-J from Homo sapiens (Human).